The sequence spans 119 residues: Large ribosomal subunit protein uL22c (119 aa).

Belongs to the universal ribosomal protein uL22 family. As to quaternary structure, part of the 50S ribosomal subunit.

Its subcellular location is the plastid. The protein localises to the chloroplast. Its function is as follows. This protein binds specifically to 23S rRNA. The globular domain of the protein is located near the polypeptide exit tunnel on the outside of the subunit, while an extended beta-hairpin is found that lines the wall of the exit tunnel in the center of the 70S ribosome. The sequence is that of Large ribosomal subunit protein uL22c (rpl22) from Anthoceros angustus (Hornwort).